Here is a 357-residue protein sequence, read N- to C-terminus: MKFVDEAFIDVAAGDGGNGCVSFRHEKYKEFGGPDGGDGGRGGHVFAVADPNLNTLVDFRYSRRHEAKRGEHGKGSDMFGAAGSDITLKMPVGTIISDADTGEVLFELLTPGEVITIAKGGDGGFGNMRFKSAINRAPRQKTPGWPGERRNLKLELKVLADVGLLGMPNAGKSTFIAAVSNARPKIADYPFTTLHPNLGVVRVGPEQSFVVADIPGLIEGASEGAGLGHQFLRHLQRTRLLLHVVDLAPFDEAVDPVAQAKAIVGELKKYDAGLYEKPRWLVLNKLDMVPSEERAARVKDFVKRFKWKGPVFEISALTREGCEPLVQSIFQHVHAQQLAQNAPAEVDPRFAGEPPRG.

The 159-residue stretch at 1-159 (MKFVDEAFID…RNLKLELKVL (159 aa)) folds into the Obg domain. An OBG-type G domain is found at 160–334 (ADVGLLGMPN…LVQSIFQHVH (175 aa)). GTP-binding positions include 166-173 (GMPNAGKS), 191-195 (FTTLH), 213-216 (DIPG), 284-287 (NKLD), and 315-317 (SAL). Residues Ser-173 and Thr-193 each contribute to the Mg(2+) site.

The protein belongs to the TRAFAC class OBG-HflX-like GTPase superfamily. OBG GTPase family. Monomer. Requires Mg(2+) as cofactor.

The protein localises to the cytoplasm. Its function is as follows. An essential GTPase which binds GTP, GDP and possibly (p)ppGpp with moderate affinity, with high nucleotide exchange rates and a fairly low GTP hydrolysis rate. Plays a role in control of the cell cycle, stress response, ribosome biogenesis and in those bacteria that undergo differentiation, in morphogenesis control. The sequence is that of GTPase Obg from Acidovorax ebreus (strain TPSY) (Diaphorobacter sp. (strain TPSY)).